The primary structure comprises 28 residues: Cytochrome b6-f complex subunit 6 (28 aa).

The chain crosses the membrane as a helical span at residues 2-22 (VEYLVILSGMFGLALACFFGL).

Belongs to the PetL family. As to quaternary structure, the 4 large subunits of the cytochrome b6-f complex are cytochrome b6, subunit IV (17 kDa polypeptide, PetD), cytochrome f and the Rieske protein, while the 4 small subunits are PetG, PetL, PetM and PetN. The complex functions as a dimer.

Its subcellular location is the plastid. The protein localises to the cyanelle thylakoid membrane. In terms of biological role, component of the cytochrome b6-f complex, which mediates electron transfer between photosystem II (PSII) and photosystem I (PSI), cyclic electron flow around PSI, and state transitions. PetL is important for photoautotrophic growth as well as for electron transfer efficiency and stability of the cytochrome b6-f complex. The polypeptide is Cytochrome b6-f complex subunit 6 (Cyanophora paradoxa).